Here is an 84-residue protein sequence, read N- to C-terminus: Cell division topological specificity factor (84 aa).

The protein belongs to the MinE family.

In terms of biological role, prevents the cell division inhibition by proteins MinC and MinD at internal division sites while permitting inhibition at polar sites. This ensures cell division at the proper site by restricting the formation of a division septum at the midpoint of the long axis of the cell. The protein is Cell division topological specificity factor of Azotobacter vinelandii (strain DJ / ATCC BAA-1303).